The chain runs to 145 residues: Leptin (145 aa).

A disulfide bridge links cysteine 95 with cysteine 145.

It belongs to the leptin family.

The protein resides in the secreted. Functionally, key player in the regulation of energy balance and body weight control. Once released into the circulation, has central and peripheral effects by binding LEPR, found in many tissues, which results in the activation of several major signaling pathways. The polypeptide is Leptin (LEP) (Meleagris gallopavo (Wild turkey)).